Here is a 604-residue protein sequence, read N- to C-terminus: Aspartate--tRNA(Asp/Asn) ligase (604 aa).

E175 serves as a coordination point for L-aspartate. The interval 199-202 (QQFK) is aspartate. Residues R221 and H456 each contribute to the L-aspartate site. 221–223 (RDE) lines the ATP pocket. An ATP-binding site is contributed by E496. An L-aspartate-binding site is contributed by R503. Position 548-551 (548-551 (GVDR)) interacts with ATP.

It belongs to the class-II aminoacyl-tRNA synthetase family. Type 1 subfamily. As to quaternary structure, homodimer.

It is found in the cytoplasm. It catalyses the reaction tRNA(Asx) + L-aspartate + ATP = L-aspartyl-tRNA(Asx) + AMP + diphosphate. In terms of biological role, aspartyl-tRNA synthetase with relaxed tRNA specificity since it is able to aspartylate not only its cognate tRNA(Asp) but also tRNA(Asn). Reaction proceeds in two steps: L-aspartate is first activated by ATP to form Asp-AMP and then transferred to the acceptor end of tRNA(Asp/Asn). The sequence is that of Aspartate--tRNA(Asp/Asn) ligase from Methylobacterium sp. (strain 4-46).